The sequence spans 421 residues: Ribosomal RNA large subunit methyltransferase G (421 aa).

The tract at residues 389–421 (EPELEQESDLNSKLDANTEVPHPQSALYGKPKA) is disordered.

This sequence belongs to the methyltransferase superfamily. RlmG family.

It localises to the cytoplasm. It carries out the reaction guanosine(1835) in 23S rRNA + S-adenosyl-L-methionine = N(2)-methylguanosine(1835) in 23S rRNA + S-adenosyl-L-homocysteine + H(+). Functionally, specifically methylates the guanine in position 1835 (m2G1835) of 23S rRNA. In Shewanella halifaxensis (strain HAW-EB4), this protein is Ribosomal RNA large subunit methyltransferase G.